We begin with the raw amino-acid sequence, 431 residues long: Glutamate-1-semialdehyde 2,1-aminomutase 1 (431 aa).

The residue at position 268 (K268) is an N6-(pyridoxal phosphate)lysine.

Belongs to the class-III pyridoxal-phosphate-dependent aminotransferase family. HemL subfamily. As to quaternary structure, homodimer. Requires pyridoxal 5'-phosphate as cofactor.

Its subcellular location is the cytoplasm. It catalyses the reaction (S)-4-amino-5-oxopentanoate = 5-aminolevulinate. It participates in porphyrin-containing compound metabolism; protoporphyrin-IX biosynthesis; 5-aminolevulinate from L-glutamyl-tRNA(Glu): step 2/2. This Bacillus pumilus (strain SAFR-032) protein is Glutamate-1-semialdehyde 2,1-aminomutase 1.